The following is a 297-amino-acid chain: Acetyl-coenzyme A carboxylase carboxyl transferase subunit beta (297 aa).

The tract at residues 1–23 (MSWIERILGRTSSSSSSSKSKVP) is disordered. The CoA carboxyltransferase N-terminal domain maps to 26–295 (VWTKCTSCEQ…PFKTAELIVE (270 aa)). Zn(2+) is bound by residues cysteine 30, cysteine 33, cysteine 49, and cysteine 52. A C4-type zinc finger spans residues 30–52 (CTSCEQVLYSEELKRNMHVCPKC).

The protein belongs to the AccD/PCCB family. Acetyl-CoA carboxylase is a heterohexamer composed of biotin carboxyl carrier protein (AccB), biotin carboxylase (AccC) and two subunits each of ACCase subunit alpha (AccA) and ACCase subunit beta (AccD). It depends on Zn(2+) as a cofactor.

It is found in the cytoplasm. The enzyme catalyses N(6)-carboxybiotinyl-L-lysyl-[protein] + acetyl-CoA = N(6)-biotinyl-L-lysyl-[protein] + malonyl-CoA. It functions in the pathway lipid metabolism; malonyl-CoA biosynthesis; malonyl-CoA from acetyl-CoA: step 1/1. Component of the acetyl coenzyme A carboxylase (ACC) complex. Biotin carboxylase (BC) catalyzes the carboxylation of biotin on its carrier protein (BCCP) and then the CO(2) group is transferred by the transcarboxylase to acetyl-CoA to form malonyl-CoA. In Actinobacillus pleuropneumoniae serotype 3 (strain JL03), this protein is Acetyl-coenzyme A carboxylase carboxyl transferase subunit beta.